Reading from the N-terminus, the 874-residue chain is Alanine--tRNA ligase (874 aa).

4 residues coordinate Zn(2+): H564, H568, C665, and H669.

This sequence belongs to the class-II aminoacyl-tRNA synthetase family. Requires Zn(2+) as cofactor.

The protein resides in the cytoplasm. It carries out the reaction tRNA(Ala) + L-alanine + ATP = L-alanyl-tRNA(Ala) + AMP + diphosphate. Its function is as follows. Catalyzes the attachment of alanine to tRNA(Ala) in a two-step reaction: alanine is first activated by ATP to form Ala-AMP and then transferred to the acceptor end of tRNA(Ala). Also edits incorrectly charged Ser-tRNA(Ala) and Gly-tRNA(Ala) via its editing domain. The polypeptide is Alanine--tRNA ligase (Delftia acidovorans (strain DSM 14801 / SPH-1)).